The sequence spans 392 residues: Alanine--glyoxylate aminotransferase (392 aa).

An N6-(pyridoxal phosphate)lysine modification is found at lysine 209. Lysine 225 carries the post-translational modification N6-acetyllysine; alternate. N6-succinyllysine; alternate is present on lysine 225. N6-acetyllysine is present on residues lysine 234 and lysine 312. Arginine 360 contacts substrate. The short motif at 390–392 is the Microbody targeting signal element; the sequence is SQL.

It belongs to the class-V pyridoxal-phosphate-dependent aminotransferase family. Homodimer. Pyridoxal 5'-phosphate is required as a cofactor.

It is found in the peroxisome. It catalyses the reaction L-serine + pyruvate = 3-hydroxypyruvate + L-alanine. The catalysed reaction is glyoxylate + L-alanine = glycine + pyruvate. Its function is as follows. Peroxisomal aminotransferase that catalyzes the transamination of glyoxylate to glycine and contributes to the glyoxylate detoxification. Also catalyzes the transamination between L-serine and pyruvate and contributes to gluconeogenesis from the L-serine metabolism. The chain is Alanine--glyoxylate aminotransferase from Oryctolagus cuniculus (Rabbit).